The sequence spans 250 residues: 5-oxoprolinase subunit A 2 (250 aa).

It belongs to the LamB/PxpA family. As to quaternary structure, forms a complex composed of PxpA, PxpB and PxpC.

It carries out the reaction 5-oxo-L-proline + ATP + 2 H2O = L-glutamate + ADP + phosphate + H(+). Functionally, catalyzes the cleavage of 5-oxoproline to form L-glutamate coupled to the hydrolysis of ATP to ADP and inorganic phosphate. This Bordetella bronchiseptica (strain ATCC BAA-588 / NCTC 13252 / RB50) (Alcaligenes bronchisepticus) protein is 5-oxoprolinase subunit A 2.